The sequence spans 369 residues: Phenylalanine--tRNA ligase alpha subunit (369 aa).

Glutamate 272 lines the Mg(2+) pocket.

The protein belongs to the class-II aminoacyl-tRNA synthetase family. Phe-tRNA synthetase alpha subunit type 1 subfamily. Tetramer of two alpha and two beta subunits. The cofactor is Mg(2+).

It is found in the cytoplasm. The catalysed reaction is tRNA(Phe) + L-phenylalanine + ATP = L-phenylalanyl-tRNA(Phe) + AMP + diphosphate + H(+). The protein is Phenylalanine--tRNA ligase alpha subunit of Cutibacterium acnes (strain DSM 16379 / KPA171202) (Propionibacterium acnes).